The chain runs to 121 residues: Large ribosomal subunit protein uL14 (121 aa).

It belongs to the universal ribosomal protein uL14 family. As to quaternary structure, part of the 50S ribosomal subunit. Forms a cluster with proteins L3 and L19. In the 70S ribosome, L14 and L19 interact and together make contacts with the 16S rRNA in bridges B5 and B8.

Functionally, binds to 23S rRNA. Forms part of two intersubunit bridges in the 70S ribosome. The chain is Large ribosomal subunit protein uL14 from Pseudoalteromonas atlantica (strain T6c / ATCC BAA-1087).